We begin with the raw amino-acid sequence, 62 residues long: Protein gp45.2 (62 aa).

In terms of biological role, may participate in replication-dependent transcriptional events during viral growth. This chain is Protein gp45.2 (45.2), found in Escherichia coli (Bacteriophage T4).